Reading from the N-terminus, the 160-residue chain is Cytochrome b6-f complex subunit 4 (160 aa).

A run of 3 helical transmembrane segments spans residues 36-56 (LLYI…GLAV), 95-115 (LLGV…PFPE), and 131-151 (TVFS…ALPI).

It belongs to the cytochrome b family. PetD subfamily. In terms of assembly, the 4 large subunits of the cytochrome b6-f complex are cytochrome b6, subunit IV (17 kDa polypeptide, petD), cytochrome f and the Rieske protein, while the 4 small subunits are petG, petL, petM and petN. The complex functions as a dimer.

Its subcellular location is the plastid. The protein localises to the chloroplast thylakoid membrane. Its function is as follows. Component of the cytochrome b6-f complex, which mediates electron transfer between photosystem II (PSII) and photosystem I (PSI), cyclic electron flow around PSI, and state transitions. This chain is Cytochrome b6-f complex subunit 4, found in Huperzia lucidula (Shining clubmoss).